A 126-amino-acid polypeptide reads, in one-letter code: Protein mmf2, mitochondrial (126 aa).

It belongs to the RutC family.

It localises to the mitochondrion. The protein localises to the cytoplasm. Functionally, plays a role in the maintenance of mitochondrial DNA. The protein is Protein mmf2, mitochondrial (mmf2) of Schizosaccharomyces pombe (strain 972 / ATCC 24843) (Fission yeast).